Consider the following 90-residue polypeptide: Putative sodium channel toxin Ts35 (90 aa).

The N-terminal stretch at 1-22 is a signal peptide; the sequence is QDEVGLGSCSVIFVVGNEEGEA. Positions 23 to 87 constitute an LCN-type CS-alpha/beta domain; sequence KDGYAVGGDR…WGNPTLGPCL (65 aa). 4 disulfide bridges follow: Cys-33-Cys-86, Cys-37-Cys-61, Cys-46-Cys-66, and Cys-50-Cys-68.

The protein belongs to the long (4 C-C) scorpion toxin superfamily. Sodium channel inhibitor family. In terms of tissue distribution, expressed by the venom gland.

The protein resides in the secreted. Its function is as follows. Putative sodium channel toxin. This is Putative sodium channel toxin Ts35 from Tityus serrulatus (Brazilian scorpion).